Reading from the N-terminus, the 339-residue chain is Heat-inducible transcription repressor HrcA (339 aa).

Belongs to the HrcA family.

In terms of biological role, negative regulator of class I heat shock genes (grpE-dnaK-dnaJ and groELS operons). Prevents heat-shock induction of these operons. This is Heat-inducible transcription repressor HrcA from Parafrankia sp. (strain EAN1pec).